Here is a 159-residue protein sequence, read N- to C-terminus: Crossover junction endodeoxyribonuclease RuvC (159 aa).

Catalysis depends on residues aspartate 7, glutamate 67, and aspartate 139. Mg(2+) is bound by residues aspartate 7, glutamate 67, and aspartate 139.

This sequence belongs to the RuvC family. Homodimer which binds Holliday junction (HJ) DNA. The HJ becomes 2-fold symmetrical on binding to RuvC with unstacked arms; it has a different conformation from HJ DNA in complex with RuvA. In the full resolvosome a probable DNA-RuvA(4)-RuvB(12)-RuvC(2) complex forms which resolves the HJ. The cofactor is Mg(2+).

The protein localises to the cytoplasm. The catalysed reaction is Endonucleolytic cleavage at a junction such as a reciprocal single-stranded crossover between two homologous DNA duplexes (Holliday junction).. In terms of biological role, the RuvA-RuvB-RuvC complex processes Holliday junction (HJ) DNA during genetic recombination and DNA repair. Endonuclease that resolves HJ intermediates. Cleaves cruciform DNA by making single-stranded nicks across the HJ at symmetrical positions within the homologous arms, yielding a 5'-phosphate and a 3'-hydroxyl group; requires a central core of homology in the junction. The consensus cleavage sequence is 5'-(A/T)TT(C/G)-3'. Cleavage occurs on the 3'-side of the TT dinucleotide at the point of strand exchange. HJ branch migration catalyzed by RuvA-RuvB allows RuvC to scan DNA until it finds its consensus sequence, where it cleaves and resolves the cruciform DNA. This is Crossover junction endodeoxyribonuclease RuvC from Thermosynechococcus vestitus (strain NIES-2133 / IAM M-273 / BP-1).